Consider the following 470-residue polypeptide: FAD-dependent monooxygenase nvfK (470 aa).

Residues 1 to 23 form the signal peptide; sequence MEKAKFKVVIVGGSITGLTLAHC. Residues E35, G49, and R108 each contribute to the FAD site. N121 carries an N-linked (GlcNAc...) asparagine glycan. The active site involves Y216. D308 and A321 together coordinate FAD. The helical transmembrane segment at 450 to 470 threads the bilayer; that stretch reads ILMSIVLVAPAWVYIFSSLVW.

Belongs to the paxM FAD-dependent monooxygenase family. It depends on FAD as a cofactor.

The protein resides in the membrane. The catalysed reaction is (3R)-3-farnesyl-6-hydroxy-2,3,5-trimethyl-4-oxocyclohexa-1,5-diene-1-carboxylate + 2-oxoglutarate + O2 = (3R)-[(10S)-11-epoxyfarnesyl]-2,3,5-trimethyl-6-oxido-4-oxocyclohexa-1,5-diene-1-carboxylate + succinate + CO2. It functions in the pathway secondary metabolite biosynthesis; terpenoid biosynthesis. Its function is as follows. FAD-dependent monooxygenase; part of the gene cluster that mediates the biosynthesis of novofumigatonin, a heavily oxygenated meroterpenoid containing a unique orthoester moiety. The first step of the pathway is the synthesis of 3,5-dimethylorsellinic acid (DMOA) by the polyketide synthase nvfA via condensation of one acetyl-CoA starter unit with 3 malonyl-CoA units and 2 methylations. DMOA is then converted to farnesyl-DMOA by the farnesyltransferase nvfB. Epoxydation by FAD-dependent monooxygenase nvfK, followed by a protonation-initiated cyclization catalyzed by the terpene cyclase nvfL leads to the production of asnavolin H. The short chain dehydrogenase nvfC then as a 3-OH dehydrogenase of asnovolin H to yield chemesin D. There are two branches to synthesize asnovolin A from chemesin D. In one branch, chemesin D undergoes Baeyer-Villiger oxidation by nvfH, methylation by nvfJ, and enoyl reduction by the nvfM D enoylreductase that reduces the double bond between C-5'and C-6', to form respectively asnovolin I, asnovolin K, and asnovolin A. In the other branch, the methylation precedes the Baeyer-Villiger oxidation and the enoyl reduction to yield asnovolin A via the asnovolin J intermediate. Asnovolin A is further converted to fumigatonoid A by the Fe(II)/2-oxoglutarate-dependent dioxygenase nvfI that catalyzes an endoperoxidation reaction. The alpha/beta hydrolase nvfD then acts as an epimerase that converts fumigatonoid A to its C-5' epimer, which then undergoes spontaneous or nvfD-catalyzed lactonization. The following step utilizes the ketoreductase nvfG to produce fumigatonoid B. The dioxygenase nvfE further converts fumigatonoid B into fumigatonoid C. Finally the Fe(II)/2-oxoglutarate-dependent dioxygenase nvfF catalyzes two rounds of oxidation to transform fumigatonoid C into the end product, novofumigatonin A. The protein is FAD-dependent monooxygenase nvfK of Aspergillus novofumigatus (strain IBT 16806).